A 391-amino-acid polypeptide reads, in one-letter code: Cyclin-A1 (391 aa).

The protein belongs to the cyclin family. Cyclin AB subfamily. As to quaternary structure, interacts with the CDK1 and the CDK2 protein kinases to form a serine/threonine kinase holoenzyme complex. The cyclin subunit imparts substrate specificity to the complex.

The protein localises to the nucleus. Its function is as follows. May be involved in the control of the cell cycle at the G1/S (start) and G2/M (mitosis) transitions. This chain is Cyclin-A1 (ccna1), found in Carassius auratus (Goldfish).